A 357-amino-acid polypeptide reads, in one-letter code: tRNA-specific 2-thiouridylase MnmA (357 aa).

ATP contacts are provided by residues alanine 3–serine 10 and leucine 29. The active-site Nucleophile is the cysteine 98. Cysteine 98 and cysteine 196 are disulfide-bonded. Residue glycine 122 participates in ATP binding. The interval lysine 146–glutamine 148 is interaction with tRNA. Catalysis depends on cysteine 196, which acts as the Cysteine persulfide intermediate. The segment at arginine 302–tyrosine 303 is interaction with tRNA.

This sequence belongs to the MnmA/TRMU family.

It localises to the cytoplasm. The catalysed reaction is S-sulfanyl-L-cysteinyl-[protein] + uridine(34) in tRNA + AH2 + ATP = 2-thiouridine(34) in tRNA + L-cysteinyl-[protein] + A + AMP + diphosphate + H(+). In terms of biological role, catalyzes the 2-thiolation of uridine at the wobble position (U34) of tRNA, leading to the formation of s(2)U34. This is tRNA-specific 2-thiouridylase MnmA from Moorella thermoacetica (strain ATCC 39073 / JCM 9320).